A 650-amino-acid chain; its full sequence is uncharacterized protein (650 aa).

The protein belongs to the MG032/MG096/MG288 family.

This is an uncharacterized protein from Mycoplasma genitalium (strain ATCC 33530 / DSM 19775 / NCTC 10195 / G37) (Mycoplasmoides genitalium).